A 313-amino-acid chain; its full sequence is Olfactory receptor 1D2 (313 aa).

The Extracellular segment spans residues 1–25 (MDGGNQSEGSEFLLLGMSESPEQQR). N-linked (GlcNAc...) asparagine glycosylation is present at Asn5. Residues 26–49 (ILFWMFLSMYLVTVLGNVLIILAI) traverse the membrane as a helical segment. At 50-57 (SSDSRLHT) the chain is on the cytoplasmic side. The chain crosses the membrane as a helical span at residues 58 to 79 (PMYFFLANLSFTDLFFVTNTIP). Topologically, residues 80–100 (KMLVNLQSQDKAISYAGCLTQ) are extracellular. Cys97 and Cys189 are disulfide-bonded. Residues 101–120 (LYFLLSLVTLDNLILAVMAY) traverse the membrane as a helical segment. Residues 121 to 139 (DRYVAICCPLHYVTAMSPR) lie on the Cytoplasmic side of the membrane. The chain crosses the membrane as a helical span at residues 140 to 158 (LCILLLSLCWVFSVLYGLI). At 159–196 (HTLLMTRVTFCGSRKIHYLFCEMYFLLRLACSNIQINH) the chain is on the extracellular side. A glycan (N-linked (GlcNAc...) asparagine) is linked at Asn195. A helical membrane pass occupies residues 197 to 219 (TVLXATGCFIFLIPLGFMIXSYA). Residues 220-236 (RIVRAILRIPSATGKYK) lie on the Cytoplasmic side of the membrane. A helical membrane pass occupies residues 237 to 259 (AFSTCASHLAVVSLFYGTLGMVY). Residues 260–271 (LQPLQTYSTKDS) lie on the Extracellular side of the membrane. The chain crosses the membrane as a helical span at residues 272–291 (VATVMYAVVTPMMNPFIYSL). The Cytoplasmic segment spans residues 292 to 313 (RNKDIHGALGRLLQGKAFQKLT).

Belongs to the G-protein coupled receptor 1 family.

It is found in the cell membrane. Its function is as follows. Odorant receptor. This is Olfactory receptor 1D2 (OR1D2) from Pongo pygmaeus (Bornean orangutan).